The chain runs to 532 residues: 2,3-bisphosphoglycerate-independent phosphoglycerate mutase (532 aa).

Mn(2+)-binding residues include aspartate 15 and serine 65. Serine 65 serves as the catalytic Phosphoserine intermediate. Substrate is bound by residues histidine 126, 156 to 157, arginine 188, arginine 194, 258 to 261, and lysine 331; these read RD and RPDR. Mn(2+)-binding residues include aspartate 398, histidine 402, aspartate 439, histidine 440, and histidine 457.

Belongs to the BPG-independent phosphoglycerate mutase family. Monomer. Requires Mn(2+) as cofactor.

It catalyses the reaction (2R)-2-phosphoglycerate = (2R)-3-phosphoglycerate. Its pathway is carbohydrate degradation; glycolysis; pyruvate from D-glyceraldehyde 3-phosphate: step 3/5. Catalyzes the interconversion of 2-phosphoglycerate and 3-phosphoglycerate. This chain is 2,3-bisphosphoglycerate-independent phosphoglycerate mutase, found in Cyanothece sp. (strain PCC 7425 / ATCC 29141).